The chain runs to 307 residues: Mitochondrial brown fat uncoupling protein 1 (307 aa).

Over 2 to 10 the chain is Mitochondrial intermembrane; the sequence is VNPTTSEVH. Residues 11–32 form a helical membrane-spanning segment; the sequence is PTMGVKIFSAGVAACLADIITF. Solcar repeat units follow at residues 11–102, 111–201, and 210–295; these read PTMG…VQEY, PTLG…MKGA, and DDVP…LKKE. Residues 33-73 lie on the Mitochondrial matrix side of the membrane; it reads PLDTAKVRLQIQGEGQISSTIRYKGVLGTITTLAKTEGLPK. Lys-56 lines the fatty acid 16:0 pocket. Residues 74-96 form a helical membrane-spanning segment; the sequence is LYSGLPAGIQRQISFASLRIGLY. The Mitochondrial intermembrane segment spans residues 97–116; the sequence is DTVQEYFSSGKETPPTLGNR. The chain crosses the membrane as a helical span at residues 117-133; sequence ISAGLMTGGVAVFIGQP. At 134–178 the chain is on the mitochondrial matrix side; it reads TEVVKVRLQAQSHLHGIKPRYTGTYNAYRIIATTESFSTLWKGTT. Residues 179–195 form a helical membrane-spanning segment; sequence PNLLRNVIINCVELVTY. Over 196–212 the chain is Mitochondrial intermembrane; it reads DLMKGALVNNQILADDV. The helical transmembrane segment at 213-232 threads the bilayer; that stretch reads PCHLLSAFVAGFCTTFLASP. The Mitochondrial matrix portion of the chain corresponds to 233 to 266; the sequence is ADVVKTRFINSLPGQYPSVPSCAMTMLTKEGPTA. Position 254 is a cysteine sulfenic acid (-SOH) (Cys-254). The chain crosses the membrane as a helical span at residues 267 to 289; sequence FFKGFVPSFLRLASWNVIMFVCF. Residue Lys-269 participates in fatty acid 16:0 binding. Residues 290-307 lie on the Mitochondrial intermembrane side of the membrane; that stretch reads EQLKKELSKSRQTVDCTT.

Belongs to the mitochondrial carrier (TC 2.A.29) family. In terms of assembly, most probably functions as a monomer. Binds one purine nucleotide per monomer. However, has also been suggested to function as a homodimer or a homotetramer. Tightly associates with cardiolipin in the mitochondrion inner membrane; may stabilize and regulate its activity. In terms of processing, may undergo sulfenylation upon cold exposure. May increase the sensitivity of UCP1 thermogenic function to the activation by noradrenaline probably through structural effects. Post-translationally, may undergo ubiquitin-mediated proteasomal degradation. Brown adipose tissue.

Its subcellular location is the mitochondrion inner membrane. The enzyme catalyses H(+)(in) = H(+)(out). With respect to regulation, has no constitutive proton transporter activity and has to be activated by long-chain fatty acids/LCFAs. Inhibited by purine nucleotides. Both purine nucleotides and LCFAs bind the cytosolic side of the transporter and directly compete to activate or inhibit it. Activated by noradrenaline and reactive oxygen species. Despite lacking canonical translational encoding for selenocysteine, a small pool of the protein has been observed to selectively incorporate selenocysteine at 'Cys-254'. Selenocysteine-modified protein is highly sensitive to redox modification and may constitute a pool of protein highly sensitive to activation by elevated levels of reactive oxygen species (ROS). In terms of biological role, mitochondrial protein responsible for thermogenic respiration, a specialized capacity of brown adipose tissue and beige fat that participates in non-shivering adaptive thermogenesis to temperature and diet variations and more generally to the regulation of energy balance. Functions as a long-chain fatty acid/LCFA and proton symporter, simultaneously transporting one LCFA and one proton through the inner mitochondrial membrane. However, LCFAs remaining associated with the transporter via their hydrophobic tails, it results in an apparent transport of protons activated by LCFAs. Thereby, dissipates the mitochondrial proton gradient and converts the energy of substrate oxydation into heat instead of ATP. Regulates the production of reactive oxygen species/ROS by mitochondria. The sequence is that of Mitochondrial brown fat uncoupling protein 1 from Mesocricetus auratus (Golden hamster).